The primary structure comprises 442 residues: Histidine--tRNA ligase (442 aa).

The protein belongs to the class-II aminoacyl-tRNA synthetase family. In terms of assembly, homodimer.

It is found in the cytoplasm. It catalyses the reaction tRNA(His) + L-histidine + ATP = L-histidyl-tRNA(His) + AMP + diphosphate + H(+). The chain is Histidine--tRNA ligase (hisS) from Helicobacter pylori (strain ATCC 700392 / 26695) (Campylobacter pylori).